Here is a 721-residue protein sequence, read N- to C-terminus: DNA ligase (721 aa).

Residues 42–46, 91–92, and Glu-125 each bind NAD(+); these read DAEYD and SL. Lys-127 functions as the N6-AMP-lysine intermediate in the catalytic mechanism. Positions 148, 184, 300, and 324 each coordinate NAD(+). Cys-430, Cys-433, Cys-448, and Cys-454 together coordinate Zn(2+). The BRCT domain occupies 642 to 721; sequence STGSPVEGKT…DAWFTLVGEE (80 aa).

This sequence belongs to the NAD-dependent DNA ligase family. LigA subfamily. The cofactor is Mg(2+). It depends on Mn(2+) as a cofactor.

It carries out the reaction NAD(+) + (deoxyribonucleotide)n-3'-hydroxyl + 5'-phospho-(deoxyribonucleotide)m = (deoxyribonucleotide)n+m + AMP + beta-nicotinamide D-nucleotide.. In terms of biological role, DNA ligase that catalyzes the formation of phosphodiester linkages between 5'-phosphoryl and 3'-hydroxyl groups in double-stranded DNA using NAD as a coenzyme and as the energy source for the reaction. It is essential for DNA replication and repair of damaged DNA. In Brucella anthropi (strain ATCC 49188 / DSM 6882 / CCUG 24695 / JCM 21032 / LMG 3331 / NBRC 15819 / NCTC 12168 / Alc 37) (Ochrobactrum anthropi), this protein is DNA ligase.